Consider the following 265-residue polypeptide: Hydroxyethylthiazole kinase (265 aa).

M43 lines the substrate pocket. The ATP site is built by K118 and T165. G192 lines the substrate pocket.

The protein belongs to the Thz kinase family. The cofactor is Mg(2+).

The enzyme catalyses 5-(2-hydroxyethyl)-4-methylthiazole + ATP = 4-methyl-5-(2-phosphooxyethyl)-thiazole + ADP + H(+). Its pathway is cofactor biosynthesis; thiamine diphosphate biosynthesis; 4-methyl-5-(2-phosphoethyl)-thiazole from 5-(2-hydroxyethyl)-4-methylthiazole: step 1/1. Functionally, catalyzes the phosphorylation of the hydroxyl group of 4-methyl-5-beta-hydroxyethylthiazole (THZ). In Pyrococcus horikoshii (strain ATCC 700860 / DSM 12428 / JCM 9974 / NBRC 100139 / OT-3), this protein is Hydroxyethylthiazole kinase.